Reading from the N-terminus, the 70-residue chain is Homeobox protein OTX2 (70 aa).

Positions 34 to 70 (HQLPGPGATLSPMGTNAVTSHLNQSPASLSTQGYGAS) are disordered. Over residues 45–70 (PMGTNAVTSHLNQSPASLSTQGYGAS) the composition is skewed to polar residues.

Belongs to the paired homeobox family. Bicoid subfamily.

It localises to the nucleus. Functionally, transcription factor probably involved in the development of the brain and the sense organs. Can bind to the bicoid/BCD target sequence (BTS): 5'-TCTAATCCC-3'. This chain is Homeobox protein OTX2 (Otx2), found in Rattus norvegicus (Rat).